The following is a 497-amino-acid chain: Cysteine--tRNA ligase (497 aa).

Position 34 (Cys-34) interacts with Zn(2+). A 'HIGH' region motif is present at residues 36-46 (PTVYDFAHIGN). Zn(2+)-binding residues include Cys-243, His-268, and Glu-272. The short motif at 301–305 (KMAKS) is the 'KMSKS' region element. Lys-304 serves as a coordination point for ATP. Residues 478–497 (LMDYKDPETGERRTKWEVKR) are disordered. Basic and acidic residues predominate over residues 480-497 (DYKDPETGERRTKWEVKR).

It belongs to the class-I aminoacyl-tRNA synthetase family. Monomer. The cofactor is Zn(2+).

The protein resides in the cytoplasm. It catalyses the reaction tRNA(Cys) + L-cysteine + ATP = L-cysteinyl-tRNA(Cys) + AMP + diphosphate. The protein is Cysteine--tRNA ligase of Chelativorans sp. (strain BNC1).